A 397-amino-acid polypeptide reads, in one-letter code: MEGMEEANRTAVESCHRVLALLSNPHGQLVPSKELVAATGEAVAKFGSLTAKLSNSNGDGLLQGHARVRKVKKPLHIFDSNLFLESSAVAAAAAPAKTPSPSPILGLQLFPRYHQFEGSSSKDPVRIPTQFPKRLLLEKPTAGMEGSTSQSPPIVQMVQPVSVAPPAGTPTPALPPAHLHFIQQQQSYQRFQLMQQMKIQSEMMKRSNLGDQGGSLSGGGGGGRKGVNLKFDSSNCTASSSRSFLSSLSMEGSLASLDGSRTSRPFQLLSGSQTASTPELGLVQRRRCAGREDGTGRCATGSRCHCSKKRKLRIRRSIKVPAISNKVADIPADEFSWRKYGQKPIKGSPHPRGYYKCSSVRGCPARKHVERCVDDPSMLIVTYEGDHNHNRVLAQPA.

The segment at residues 326–392 (KVADIPADEF…YEGDHNHNRV (67 aa)) is a DNA-binding region (WRKY).

Belongs to the WRKY group II-d family. As to quaternary structure, interacts with RS2. More abundant in apices and young leaf primordia than in fully expanded leaf tissues.

It localises to the nucleus. Its function is as follows. Transcription factor. Interacts specifically with the W box (5'-(T)TGAC[CT]-3'), a frequently occurring elicitor-responsive cis-acting element. The sequence is that of Protein WRKY1 from Zea mays (Maize).